A 419-amino-acid polypeptide reads, in one-letter code: uncharacterized protein (419 aa).

A run of 7 helical transmembrane segments spans residues 16 to 36 (IMAK…LVVT), 186 to 206 (LVYI…SMIA), 235 to 255 (LLGI…AGSL), 283 to 303 (VIYA…LAAF), 318 to 338 (ITPM…GLNA), 340 to 360 (DAGF…IMFL), and 369 to 389 (FWQA…LAVI).

It to M.jannaschii MJ1024.

The protein resides in the cell membrane. This is an uncharacterized protein from Bacillus subtilis (strain 168).